The chain runs to 319 residues: Cytochrome f (319 aa).

The first 34 residues, 1–34 (MQNRNTYDLKKKMTRLISVLVMIHIITRTSISNA), serve as a signal peptide directing secretion. Residues Tyr-35, Cys-55, Cys-58, and His-59 each contribute to the heme site. A helical transmembrane segment spans residues 285–304 (VKGLLLFLASVILAQIFLVL).

Belongs to the cytochrome f family. The 4 large subunits of the cytochrome b6-f complex are cytochrome b6, subunit IV (17 kDa polypeptide, petD), cytochrome f and the Rieske protein, while the 4 small subunits are PetG, PetL, PetM and PetN. The complex functions as a dimer. Heme is required as a cofactor.

Its subcellular location is the plastid. It is found in the chloroplast thylakoid membrane. Functionally, component of the cytochrome b6-f complex, which mediates electron transfer between photosystem II (PSII) and photosystem I (PSI), cyclic electron flow around PSI, and state transitions. The protein is Cytochrome f (petA) of Picea abies (Norway spruce).